The following is a 720-amino-acid chain: Polyribonucleotide nucleotidyltransferase (720 aa).

Asp486 and Asp492 together coordinate Mg(2+). In terms of domain architecture, KH spans 553-612 (PRITVINVPKEKIREVIGTGGKVIREIVEFSGAKIDIEDDGTIKIASTSEESTQKAIDRI). The 69-residue stretch at 622-690 (GKIYNGKVVK…DRGKVKLSMR (69 aa)) folds into the S1 motif domain. Residues 698–720 (EDISDKVGPKGGRGGRGEGDLAE) form a disordered region.

This sequence belongs to the polyribonucleotide nucleotidyltransferase family. Requires Mg(2+) as cofactor.

Its subcellular location is the cytoplasm. It carries out the reaction RNA(n+1) + phosphate = RNA(n) + a ribonucleoside 5'-diphosphate. Functionally, involved in mRNA degradation. Catalyzes the phosphorolysis of single-stranded polyribonucleotides processively in the 3'- to 5'-direction. This Granulibacter bethesdensis (strain ATCC BAA-1260 / CGDNIH1) protein is Polyribonucleotide nucleotidyltransferase.